The following is a 163-amino-acid chain: MASVSEHCLNEIKPTILKCDKNKDRQYSIDEIVQLLKKNSKNPERLAVLLFKSLNKKLDESICFNDIDDREISKNCDKFQDKPEIDIESFLLRFDKNNDKMISHHELKTKLDELGCGNSKKTTDYVFEQIDTNKEGSLSYEDLEGFVKFLKQDNNKKTSLPSV.

3 consecutive EF-hand domains span residues 20-42 (DKNK…NSKN), 82-117 (KPEI…LGCG), and 118-153 (NSKK…LKQD). Positions 95, 97, 99, 101, 106, 131, 133, 135, 137, and 142 each coordinate Ca(2+).

The sequence is that of Calcium-binding protein I (cbpI) from Dictyostelium discoideum (Social amoeba).